Reading from the N-terminus, the 34-residue chain is NKGCATCSIGIACLVDGPIPDFECAGATGLGLWG.

A cross-link (cyclopeptide (Asn-Gly)) is located at residues 1–34 (NKGCATCSIGIACLVDGPIPDFECAGATGLGLWG). Positions 7-28 (CSIGIACLVDGPIPDFECAGAT) form a cross-link, 2-cysteinyl-D-allo-threonine (Cys-Thr). The segment at residues 13–22 (CLVDGPIPDF) is a cross-link (2-cysteinyl-L-phenylalanine (Cys-Phe)).

The protein belongs to the bacteriocin class V family. Post-translationally, alpha-amino of Asn-1 is covalently linked with the carboxyl of Gly-34 to form a cyclopeptide. Thioether cross-links are formed between cysteines and the alpha-carbons of other amino acids, Cys-7 to Thr-28 and Cys-13 to Phe-22. In forming this cross-link, Thr-28 is converted to D-amino acid.

Its subcellular location is the secreted. Functionally, has bactericidal activity against some Gram-positive bacteria. This chain is Subtilosin-A, found in Cytobacillus firmus (Bacillus firmus).